A 344-amino-acid polypeptide reads, in one-letter code: F-box protein HRT3 (344 aa).

The stretch at 14-47 (AIAIWEKGVLKEKDGSMSDAINFYRSALKIHDNV) is one TPR repeat. The region spanning 98 to 148 (WILEILPDDILLRIIKKVILMSGESWVNLSMTCSTFSKLCFHDSVPFKTFA) is the F-box domain.

In terms of assembly, interacts with SKP1. Component of the probable SCF(HRT3) complex containing CDC53, SKP1, RBX1 and HRT3.

The protein operates within protein modification; protein ubiquitination. Substrate recognition component of a SCF (SKP1-CUL1-F-box protein) E3 ubiquitin-protein ligase complex which mediates the ubiquitination and subsequent proteasomal degradation of target proteins. Probably recognizes and binds to phosphorylated target proteins. The polypeptide is F-box protein HRT3 (HRT3) (Saccharomyces cerevisiae (strain ATCC 204508 / S288c) (Baker's yeast)).